An 877-amino-acid chain; its full sequence is Alanine--tRNA ligase (877 aa).

Zn(2+)-binding residues include H565, H569, C667, and H671.

The protein belongs to the class-II aminoacyl-tRNA synthetase family. The cofactor is Zn(2+).

The protein resides in the cytoplasm. The catalysed reaction is tRNA(Ala) + L-alanine + ATP = L-alanyl-tRNA(Ala) + AMP + diphosphate. In terms of biological role, catalyzes the attachment of alanine to tRNA(Ala) in a two-step reaction: alanine is first activated by ATP to form Ala-AMP and then transferred to the acceptor end of tRNA(Ala). Also edits incorrectly charged Ser-tRNA(Ala) and Gly-tRNA(Ala) via its editing domain. The protein is Alanine--tRNA ligase of Chromobacterium violaceum (strain ATCC 12472 / DSM 30191 / JCM 1249 / CCUG 213 / NBRC 12614 / NCIMB 9131 / NCTC 9757 / MK).